Reading from the N-terminus, the 181-residue chain is Cytochrome P450 monooxygenase dtpC (181 aa).

Cys125 provides a ligand contact to heme.

The protein belongs to the cytochrome P450 family. Requires heme as cofactor.

It participates in alkaloid biosynthesis. Its pathway is secondary metabolite biosynthesis. In terms of biological role, cytochrome P450 monooxygenase; part of the gene cluster that mediates the biosynthesis of the dimeric diketopiperazine alkaloid ditryptophenaline. The nonribosomal peptide synthase dtpA accepts L-tryptophan and L-phenylalanine as its substrates and forms the phenylalanyl-tryptophanyl cyclic dipeptide product cyclophenylalanyltryptophenyl. The N-methyltransferase dtpB is responsible for the N-methylation of cyclophenylalanyltryptophenyl to yield cyclo-N-methylphenylalanyltryptophenyl. The cytochrome P450 monooxygenase is responsible not only for pyrroloindole ring formation but also for concurrent dimerization of N-methylphenylalanyltryptophanyl diketopiperazine monomers into a homodimeric product. The protein is Cytochrome P450 monooxygenase dtpC of Aspergillus flavus (strain ATCC 200026 / FGSC A1120 / IAM 13836 / NRRL 3357 / JCM 12722 / SRRC 167).